Here is a 389-residue protein sequence, read N- to C-terminus: Chalcone synthase H2 (389 aa).

Cys164 is an active-site residue.

It belongs to the thiolase-like superfamily. Chalcone/stilbene synthases family.

It is found in the cytoplasm. The enzyme catalyses (E)-4-coumaroyl-CoA + 3 malonyl-CoA + 3 H(+) = 2',4,4',6'-tetrahydroxychalcone + 3 CO2 + 4 CoA. It functions in the pathway secondary metabolite biosynthesis; flavonoid biosynthesis. Functionally, involved in the biosynthesis of prenylated phenolics natural products which contribute to the bitter taste of beer and display broad biological activities. Chalcone synthase that can use 4-coumaroyl-CoA to produce 4,2',4',6'-tetrahydroxychalcone (also termed naringenin-chalcone or chalcone) which can, under specific conditions, spontaneously isomerize into naringenin. This Humulus lupulus (European hop) protein is Chalcone synthase H2.